A 300-amino-acid polypeptide reads, in one-letter code: Protoheme IX farnesyltransferase 1 (300 aa).

Helical transmembrane passes span Val-28–Leu-48, Val-54–Ile-74, Ala-100–Asn-120, Leu-122–Leu-142, Asn-149–Thr-169, Ala-176–Ile-196, Cys-222–Met-242, Ser-243–Trp-263, and Phe-280–Ala-300.

Belongs to the UbiA prenyltransferase family. Protoheme IX farnesyltransferase subfamily.

It localises to the cell inner membrane. The enzyme catalyses heme b + (2E,6E)-farnesyl diphosphate + H2O = Fe(II)-heme o + diphosphate. The protein operates within porphyrin-containing compound metabolism; heme O biosynthesis; heme O from protoheme: step 1/1. In terms of biological role, converts heme B (protoheme IX) to heme O by substitution of the vinyl group on carbon 2 of heme B porphyrin ring with a hydroxyethyl farnesyl side group. This Shewanella sp. (strain MR-4) protein is Protoheme IX farnesyltransferase 1.